Consider the following 527-residue polypeptide: EGF domain-specific O-linked N-acetylglucosamine transferase (527 aa).

A signal peptide spans 1 to 17 (MFMLLVFGALLPEVPLS). Residues 295-297 (DYD) carry the Required for optimal activity motif. An N-linked (GlcNAc...) asparagine glycan is attached at N354. Positions 524–527 (HDEL) match the Prevents secretion from ER motif.

Belongs to the glycosyltransferase 61 family.

Its subcellular location is the endoplasmic reticulum lumen. It catalyses the reaction L-seryl-[protein] + UDP-N-acetyl-alpha-D-glucosamine = 3-O-(N-acetyl-beta-D-glucosaminyl)-L-seryl-[protein] + UDP + H(+). The enzyme catalyses L-threonyl-[protein] + UDP-N-acetyl-alpha-D-glucosamine = 3-O-(N-acetyl-beta-D-glucosaminyl)-L-threonyl-[protein] + UDP + H(+). Functionally, catalyzes the transfer of a single N-acetylglucosamine from UDP-GlcNAc to a serine or threonine residue in extracellular proteins resulting in their modification with a beta-linked N-acetylglucosamine (O-GlcNAc). Specifically glycosylates the Thr residue located between the fifth and sixth conserved cysteines of folded EGF-like domains. The protein is EGF domain-specific O-linked N-acetylglucosamine transferase (EOGT) of Bos taurus (Bovine).